The chain runs to 380 residues: Queuine tRNA-ribosyltransferase (380 aa).

Asp95 acts as the Proton acceptor in catalysis. Substrate-binding positions include 95 to 99 (DSGGF), Asp149, Gln192, and Gly219. The RNA binding stretch occupies residues 250 to 256 (GVGSADA). Asp269 (nucleophile) is an active-site residue. An RNA binding; important for wobble base 34 recognition region spans residues 274-278 (TRIAR). Residues Cys307, Cys309, Cys312, and His338 each contribute to the Zn(2+) site.

This sequence belongs to the queuine tRNA-ribosyltransferase family. In terms of assembly, homodimer. Within each dimer, one monomer is responsible for RNA recognition and catalysis, while the other monomer binds to the replacement base PreQ1. It depends on Zn(2+) as a cofactor.

It catalyses the reaction 7-aminomethyl-7-carbaguanine + guanosine(34) in tRNA = 7-aminomethyl-7-carbaguanosine(34) in tRNA + guanine. It participates in tRNA modification; tRNA-queuosine biosynthesis. Its function is as follows. Catalyzes the base-exchange of a guanine (G) residue with the queuine precursor 7-aminomethyl-7-deazaguanine (PreQ1) at position 34 (anticodon wobble position) in tRNAs with GU(N) anticodons (tRNA-Asp, -Asn, -His and -Tyr). Catalysis occurs through a double-displacement mechanism. The nucleophile active site attacks the C1' of nucleotide 34 to detach the guanine base from the RNA, forming a covalent enzyme-RNA intermediate. The proton acceptor active site deprotonates the incoming PreQ1, allowing a nucleophilic attack on the C1' of the ribose to form the product. After dissociation, two additional enzymatic reactions on the tRNA convert PreQ1 to queuine (Q), resulting in the hypermodified nucleoside queuosine (7-(((4,5-cis-dihydroxy-2-cyclopenten-1-yl)amino)methyl)-7-deazaguanosine). The chain is Queuine tRNA-ribosyltransferase from Lactiplantibacillus plantarum (strain ATCC BAA-793 / NCIMB 8826 / WCFS1) (Lactobacillus plantarum).